Reading from the N-terminus, the 175-residue chain is EKC/KEOPS complex subunit TPRKB (175 aa).

The protein belongs to the CGI121/TPRKB family. Component of the EKC/KEOPS complex.

It is found in the cytoplasm. The protein localises to the cytosol. It localises to the nucleus. In terms of biological role, component of the EKC/KEOPS complex that is required for the formation of a threonylcarbamoyl group on adenosine at position 37 (t(6)A37) in tRNAs that read codons beginning with adenine. The complex is probably involved in the transfer of the threonylcarbamoyl moiety of threonylcarbamoyl-AMP (TC-AMP) to the N6 group of A37. Tprkb acts as an allosteric effector that regulates the t(6)A activity of the complex. In Danio rerio (Zebrafish), this protein is EKC/KEOPS complex subunit TPRKB.